The primary structure comprises 227 residues: Ribose-5-phosphate isomerase A (227 aa).

Residues 30–33 (TGST), 86–89 (DGAD), and 99–102 (KGMG) each bind substrate. The active-site Proton acceptor is glutamate 108. Lysine 126 is a binding site for substrate.

The protein belongs to the ribose 5-phosphate isomerase family. In terms of assembly, homodimer.

The catalysed reaction is aldehydo-D-ribose 5-phosphate = D-ribulose 5-phosphate. It functions in the pathway carbohydrate degradation; pentose phosphate pathway; D-ribose 5-phosphate from D-ribulose 5-phosphate (non-oxidative stage): step 1/1. Its function is as follows. Catalyzes the reversible conversion of ribose-5-phosphate to ribulose 5-phosphate. In Thermus thermophilus (strain ATCC 27634 / DSM 579 / HB8), this protein is Ribose-5-phosphate isomerase A.